Consider the following 234-residue polypeptide: Purine nucleoside phosphorylase DeoD-type (234 aa).

Histidine 4 serves as a coordination point for a purine D-ribonucleoside. Phosphate-binding positions include glycine 20, arginine 24, arginine 43, and 87–90; that span reads RIGS. A purine D-ribonucleoside is bound by residues glutamate 162, 179–181, and 203–204; these read EME and SD. The active-site Proton donor is aspartate 204.

This sequence belongs to the PNP/UDP phosphorylase family. In terms of assembly, homohexamer; trimer of homodimers.

The catalysed reaction is a purine D-ribonucleoside + phosphate = a purine nucleobase + alpha-D-ribose 1-phosphate. It catalyses the reaction a purine 2'-deoxy-D-ribonucleoside + phosphate = a purine nucleobase + 2-deoxy-alpha-D-ribose 1-phosphate. In terms of biological role, catalyzes the reversible phosphorolytic breakdown of the N-glycosidic bond in the beta-(deoxy)ribonucleoside molecules, with the formation of the corresponding free purine bases and pentose-1-phosphate. This is Purine nucleoside phosphorylase DeoD-type from Jannaschia sp. (strain CCS1).